The primary structure comprises 187 residues: Holliday junction branch migration complex subunit RuvA (187 aa).

The segment at 1-64 (MIEYVRGIIE…EDGFQIFGFK (64 aa)) is domain I. A domain II region spans residues 65 to 136 (TKEELDLFEK…ELKDKLPKEI (72 aa)). Residues 136–139 (IVFE) are flexible linker. Positions 140–187 (GDNNFSNEALEALLALGYTKSEAIYALADITCDSVEDAVKQALKKLMK) are domain III.

It belongs to the RuvA family. As to quaternary structure, homotetramer. Forms an RuvA(8)-RuvB(12)-Holliday junction (HJ) complex. HJ DNA is sandwiched between 2 RuvA tetramers; dsDNA enters through RuvA and exits via RuvB. An RuvB hexamer assembles on each DNA strand where it exits the tetramer. Each RuvB hexamer is contacted by two RuvA subunits (via domain III) on 2 adjacent RuvB subunits; this complex drives branch migration. In the full resolvosome a probable DNA-RuvA(4)-RuvB(12)-RuvC(2) complex forms which resolves the HJ.

It localises to the cytoplasm. Its function is as follows. The RuvA-RuvB-RuvC complex processes Holliday junction (HJ) DNA during genetic recombination and DNA repair, while the RuvA-RuvB complex plays an important role in the rescue of blocked DNA replication forks via replication fork reversal (RFR). RuvA specifically binds to HJ cruciform DNA, conferring on it an open structure. The RuvB hexamer acts as an ATP-dependent pump, pulling dsDNA into and through the RuvAB complex. HJ branch migration allows RuvC to scan DNA until it finds its consensus sequence, where it cleaves and resolves the cruciform DNA. The chain is Holliday junction branch migration complex subunit RuvA from Thermoanaerobacter pseudethanolicus (strain ATCC 33223 / 39E) (Clostridium thermohydrosulfuricum).